The chain runs to 233 residues: 7-cyano-7-deazaguanine synthase (233 aa).

ATP is bound at residue Phe-18–Leu-28. 4 residues coordinate Zn(2+): Cys-198, Cys-213, Cys-216, and Cys-219.

Belongs to the QueC family. The cofactor is Zn(2+).

The catalysed reaction is 7-carboxy-7-deazaguanine + NH4(+) + ATP = 7-cyano-7-deazaguanine + ADP + phosphate + H2O + H(+). It participates in purine metabolism; 7-cyano-7-deazaguanine biosynthesis. Functionally, catalyzes the ATP-dependent conversion of 7-carboxy-7-deazaguanine (CDG) to 7-cyano-7-deazaguanine (preQ(0)). This Wolinella succinogenes (strain ATCC 29543 / DSM 1740 / CCUG 13145 / JCM 31913 / LMG 7466 / NCTC 11488 / FDC 602W) (Vibrio succinogenes) protein is 7-cyano-7-deazaguanine synthase.